A 427-amino-acid polypeptide reads, in one-letter code: N-myc proto-oncogene protein (427 aa).

Disordered regions lie at residues 45–79, 144–173, 195–255, and 297–349; these read FELL…SVGL, EKLQ…SGRA, AAEG…STNK, and APSP…RNHN. Composition is skewed to pro residues over residues 49–61 and 152–167; these read PTPP…PAPG and AAPP…PPVP. Positions 210 to 221 are enriched in low complexity; it reads RASSSSSSSGDD. A compositionally biased stretch (acidic residues) spans 222–242; the sequence is TLSDSEDDEDEEEEDEEEEID. 2 positions are modified to phosphoserine; by CK2: Ser224 and Ser226. The 54-residue stretch at 343-396 folds into the bHLH domain; that stretch reads ERRRNHNILERQRANDLRSSFLTLRDHVLSELVQNEKAAKVVILKKATEYVHSL. The leucine-zipper stretch occupies residues 396-417; sequence LQAEEQKLLLEKEKLQARQEQL.

In terms of assembly, efficient DNA binding requires dimerization with another bHLH protein. Binds DNA as a heterodimer with MAX.

Its subcellular location is the nucleus. In Serinus canaria (Island canary), this protein is N-myc proto-oncogene protein (MYCN).